The chain runs to 96 residues: MEQAPEDQGPQREPHNEWTLELLEELKNEAVRHFPRIWLHGLGQHIYETYGDTWAGVEAIIRILQQLLFIHFRIGCRHSRIGVTRQRRARNGASRS.

Positions 1–42 (MEQAPEDQGPQREPHNEWTLELLEELKNEAVRHFPRIWLHGL) are homooligomerization. 3 positions are modified to phosphoserine; by host: serine 79, serine 94, and serine 96.

This sequence belongs to the HIV-1 VPR protein family. As to quaternary structure, homooligomer, may form homodimer. Interacts with p6-gag region of the Pr55 Gag precursor protein through a (Leu-X-X)4 motif near the C-terminus of the P6gag protein. Interacts with host UNG. May interact with host RAD23A/HHR23A. Interacts with host VPRBP/DCAF1, leading to hijack the CUL4A-RBX1-DDB1-DCAF1/VPRBP complex, mediating ubiquitination of host proteins such as TERT and ZGPAT and arrest of the cell cycle in G2 phase. Phosphorylated on several residues by host. These phosphorylations regulate VPR activity for the nuclear import of the HIV-1 pre-integration complex.

The protein localises to the virion. The protein resides in the host nucleus. Its subcellular location is the host extracellular space. Its function is as follows. During virus entry, plays a role in the transport of the viral pre-integration (PIC) complex to the host nucleus. This function is crucial for viral infection of non-dividing macrophages. May act directly at the nuclear pore complex, by binding nucleoporins phenylalanine-glycine (FG)-repeat regions. Functionally, during virus replication, may deplete host UNG protein, and incude G2-M cell cycle arrest. Acts by targeting specific host proteins for degradation by the 26S proteasome, through association with the cellular CUL4A-DDB1 E3 ligase complex by direct interaction with host VPRPB/DCAF-1. Cell cycle arrest reportedly occurs within hours of infection and is not blocked by antiviral agents, suggesting that it is initiated by the VPR carried into the virion. Additionally, VPR induces apoptosis in a cell cycle dependent manner suggesting that these two effects are mechanistically linked. Detected in the serum and cerebrospinal fluid of AIDS patient, VPR may also induce cell death to bystander cells. The chain is Protein Vpr from Homo sapiens (Human).